A 556-amino-acid chain; its full sequence is Formate--tetrahydrofolate ligase (556 aa).

65–72 (TPAGEGKT) contacts ATP.

This sequence belongs to the formate--tetrahydrofolate ligase family.

The catalysed reaction is (6S)-5,6,7,8-tetrahydrofolate + formate + ATP = (6R)-10-formyltetrahydrofolate + ADP + phosphate. It participates in one-carbon metabolism; tetrahydrofolate interconversion. The sequence is that of Formate--tetrahydrofolate ligase from Carboxydothermus hydrogenoformans (strain ATCC BAA-161 / DSM 6008 / Z-2901).